Consider the following 929-residue polypeptide: Isoleucine--tRNA ligase (929 aa).

A 'HIGH' region motif is present at residues 57-67 (PYANGNIHVGH). Residue glutamate 554 coordinates L-isoleucyl-5'-AMP. Residues 595-599 (KMSKS) carry the 'KMSKS' region motif. Residue lysine 598 coordinates ATP. Residues cysteine 888, cysteine 891, cysteine 908, and cysteine 911 each contribute to the Zn(2+) site.

This sequence belongs to the class-I aminoacyl-tRNA synthetase family. IleS type 1 subfamily. Monomer. Zn(2+) serves as cofactor.

The protein resides in the cytoplasm. The enzyme catalyses tRNA(Ile) + L-isoleucine + ATP = L-isoleucyl-tRNA(Ile) + AMP + diphosphate. Its function is as follows. Catalyzes the attachment of isoleucine to tRNA(Ile). As IleRS can inadvertently accommodate and process structurally similar amino acids such as valine, to avoid such errors it has two additional distinct tRNA(Ile)-dependent editing activities. One activity is designated as 'pretransfer' editing and involves the hydrolysis of activated Val-AMP. The other activity is designated 'posttransfer' editing and involves deacylation of mischarged Val-tRNA(Ile). The chain is Isoleucine--tRNA ligase from Streptococcus thermophilus (strain ATCC BAA-491 / LMD-9).